Here is a 113-residue protein sequence, read N- to C-terminus: U11-theraphotoxin-Hhn1a (113 aa).

The signal sequence occupies residues 1–21 (MNTVRVTFLLVFVLAVSLGQA). The propeptide occupies 22-74 (DKDENRMEMQKKTEQGKSYLDFAENLLLQKLEELEAKLLEEDSEESRNSRQKR). Intrachain disulfides connect Cys-75-Cys-90, Cys-82-Cys-95, and Cys-89-Cys-110.

The protein belongs to the neurotoxin 14 (magi-1) family. 01 (HNTX-16) subfamily. In terms of tissue distribution, expressed by the venom gland.

Its subcellular location is the secreted. In terms of biological role, probable ion channel inhibitor. The sequence is that of U11-theraphotoxin-Hhn1a from Cyriopagopus hainanus (Chinese bird spider).